The primary structure comprises 241 residues: Ubiquinone biosynthesis O-methyltransferase (241 aa).

S-adenosyl-L-methionine contacts are provided by arginine 46, glycine 66, aspartate 87, and methionine 131.

The protein belongs to the methyltransferase superfamily. UbiG/COQ3 family.

It carries out the reaction a 3-demethylubiquinol + S-adenosyl-L-methionine = a ubiquinol + S-adenosyl-L-homocysteine + H(+). The enzyme catalyses a 3-(all-trans-polyprenyl)benzene-1,2-diol + S-adenosyl-L-methionine = a 2-methoxy-6-(all-trans-polyprenyl)phenol + S-adenosyl-L-homocysteine + H(+). It participates in cofactor biosynthesis; ubiquinone biosynthesis. O-methyltransferase that catalyzes the 2 O-methylation steps in the ubiquinone biosynthetic pathway. The polypeptide is Ubiquinone biosynthesis O-methyltransferase (Bordetella avium (strain 197N)).